Reading from the N-terminus, the 1063-residue chain is Error-prone DNA polymerase (1063 aa).

This sequence belongs to the DNA polymerase type-C family. DnaE2 subfamily.

The protein resides in the cytoplasm. The catalysed reaction is DNA(n) + a 2'-deoxyribonucleoside 5'-triphosphate = DNA(n+1) + diphosphate. DNA polymerase involved in damage-induced mutagenesis and translesion synthesis (TLS). It is not the major replicative DNA polymerase. This Burkholderia mallei (strain ATCC 23344) protein is Error-prone DNA polymerase.